Reading from the N-terminus, the 150-residue chain is uncharacterized protein (150 aa).

Belongs to the Dps family.

This is an uncharacterized protein from Kitasatospora aureofaciens (Streptomyces aureofaciens).